Reading from the N-terminus, the 474-residue chain is Aspartyl/glutamyl-tRNA(Asn/Gln) amidotransferase subunit B (474 aa).

This sequence belongs to the GatB/GatE family. GatB subfamily. In terms of assembly, heterotrimer of A, B and C subunits.

It catalyses the reaction L-glutamyl-tRNA(Gln) + L-glutamine + ATP + H2O = L-glutaminyl-tRNA(Gln) + L-glutamate + ADP + phosphate + H(+). The enzyme catalyses L-aspartyl-tRNA(Asn) + L-glutamine + ATP + H2O = L-asparaginyl-tRNA(Asn) + L-glutamate + ADP + phosphate + 2 H(+). Functionally, allows the formation of correctly charged Asn-tRNA(Asn) or Gln-tRNA(Gln) through the transamidation of misacylated Asp-tRNA(Asn) or Glu-tRNA(Gln) in organisms which lack either or both of asparaginyl-tRNA or glutaminyl-tRNA synthetases. The reaction takes place in the presence of glutamine and ATP through an activated phospho-Asp-tRNA(Asn) or phospho-Glu-tRNA(Gln). This is Aspartyl/glutamyl-tRNA(Asn/Gln) amidotransferase subunit B from Limosilactobacillus fermentum (strain NBRC 3956 / LMG 18251) (Lactobacillus fermentum).